A 436-amino-acid polypeptide reads, in one-letter code: Adenylosuccinate synthetase (436 aa).

GTP is bound by residues 12–18 and 40–42; these read GDEGKGK and GHT. D13 functions as the Proton acceptor in the catalytic mechanism. Mg(2+) is bound by residues D13 and G40. IMP contacts are provided by residues 13-16, 38-41, T128, R142, Q223, T238, and R302; these read DEGK and NAGH. The Proton donor role is filled by H41. Substrate is bound at residue 298–304; sequence TTTGRRR. Residues R304, 330-332, and 412-414 contribute to the GTP site; these read KLD and SLG.

It belongs to the adenylosuccinate synthetase family. Homodimer. The cofactor is Mg(2+).

The protein resides in the cytoplasm. The enzyme catalyses IMP + L-aspartate + GTP = N(6)-(1,2-dicarboxyethyl)-AMP + GDP + phosphate + 2 H(+). The protein operates within purine metabolism; AMP biosynthesis via de novo pathway; AMP from IMP: step 1/2. Its function is as follows. Plays an important role in the de novo pathway of purine nucleotide biosynthesis. Catalyzes the first committed step in the biosynthesis of AMP from IMP. In Prochlorococcus marinus (strain AS9601), this protein is Adenylosuccinate synthetase.